We begin with the raw amino-acid sequence, 327 residues long: Glutamyl endopeptidase (327 aa).

Positions 1–29 (MKGKFLKVSSLFVATLTTATLVSSPAANA) are cleaved as a signal peptide. The propeptide occupies 30-68 (LSSKAMDNHPQQSQSSKQQTPKIQKGGNLKPLEQREHAN). A disordered region spans residues 33 to 61 (KAMDNHPQQSQSSKQQTPKIQKGGNLKPL). Residues 40-54 (QQSQSSKQQTPKIQK) are compositionally biased toward low complexity. Residues His-119, Asp-161, and Ser-237 each act as charge relay system in the active site. Residues 283-327 (FANDDQPNNPDNPDNPNNPDNPNNPNNPDNPDNGDNNNSDNPDAA) form a disordered region. Residues 286-327 (DDQPNNPDNPDNPNNPDNPNNPNNPDNPDNGDNNNSDNPDAA) show a composition bias toward low complexity. 9 tandem repeats follow at residues 289–291 (PNN), 292–294 (PDN), 295–297 (PDN), 298–300 (PNN), 301–303 (PDN), 304–306 (PNN), 307–309 (PNN), 310–312 (PDN), and 313–315 (PDN). Residues 289–315 (PNNPDNPDNPNNPDNPNNPNNPDNPDN) are 9 X 3 AA repeats of P-[DN]-N.

Belongs to the peptidase S1B family. Post-translationally, proteolytically cleaved by aureolysin (aur). This cleavage leads to the activation of SspA.

It localises to the secreted. It catalyses the reaction Preferential cleavage: Glu-|-Xaa, Asp-|-Xaa.. Functionally, preferentially cleaves peptide bonds on the carboxyl-terminal side of aspartate and glutamate. Along with other extracellular proteases it is involved in colonization and infection of human tissues. Required for proteolytic maturation of thiol protease SspB and inactivation of SspC, an inhibitor of SspB. It is the most important protease for degradation of fibronectin-binding protein (FnBP) and surface protein A, which are involved in adherence to host cells. May also protect bacteria against host defense mechanism by cleaving the immunoglobulin classes IgG, IgA and IgM. May be involved in the stability of secreted lipases. This Staphylococcus aureus (strain MW2) protein is Glutamyl endopeptidase (sspA).